Reading from the N-terminus, the 596-residue chain is Phosphoenolpyruvate carboxykinase [GTP] (596 aa).

Residues arginine 77 and 205–207 each bind substrate; that span reads YGG. Lysine 214 and histidine 234 together coordinate Mn(2+). Serine 256 is a substrate binding site. Residue 257–262 coordinates GTP; sequence ACGKTN. Residue cysteine 258 is part of the active site. Aspartate 283 serves as a coordination point for Mn(2+). Residues 362-388 are disordered; that stretch reads KKGSTEKAAHPNSRFTAPAKNNPAISP. 373 to 375 contributes to the substrate binding site; that stretch reads NSR. Residues arginine 375, arginine 406, and 499-502 each bind GTP; that span reads YGDN.

Belongs to the phosphoenolpyruvate carboxykinase [GTP] family. In terms of assembly, monomer. Requires Mn(2+) as cofactor.

The protein resides in the cytoplasm. It catalyses the reaction oxaloacetate + GTP = phosphoenolpyruvate + GDP + CO2. The protein operates within carbohydrate biosynthesis; gluconeogenesis. In terms of biological role, catalyzes the conversion of oxaloacetate (OAA) to phosphoenolpyruvate (PEP), the rate-limiting step in the metabolic pathway that produces glucose from lactate and other precursors derived from the citric acid cycle. The protein is Phosphoenolpyruvate carboxykinase [GTP] of Anaeromyxobacter dehalogenans (strain 2CP-1 / ATCC BAA-258).